Consider the following 500-residue polypeptide: Glycerol kinase (500 aa).

Thr17 is an ADP binding site. ATP is bound by residues Thr17, Thr18, and Ser19. Thr17 is a binding site for sn-glycerol 3-phosphate. Arg21 contacts ADP. Positions 87, 88, 139, and 243 each coordinate sn-glycerol 3-phosphate. Glycerol is bound by residues Arg87, Glu88, Tyr139, Asp243, and Gln244. ADP is bound by residues Thr265 and Gly308. ATP is bound by residues Thr265, Gly308, Gln312, and Gly409. ADP contacts are provided by Gly409 and Asn413.

It belongs to the FGGY kinase family.

The catalysed reaction is glycerol + ATP = sn-glycerol 3-phosphate + ADP + H(+). The protein operates within polyol metabolism; glycerol degradation via glycerol kinase pathway; sn-glycerol 3-phosphate from glycerol: step 1/1. With respect to regulation, inhibited by fructose 1,6-bisphosphate (FBP). In terms of biological role, key enzyme in the regulation of glycerol uptake and metabolism. Catalyzes the phosphorylation of glycerol to yield sn-glycerol 3-phosphate. In Pseudomonas fluorescens (strain Pf0-1), this protein is Glycerol kinase.